A 490-amino-acid polypeptide reads, in one-letter code: Cobyric acid synthase (490 aa).

One can recognise a GATase cobBQ-type domain in the interval 252 to 439 (RLKVVVPVLP…LHGLFESTAA (188 aa)). Catalysis depends on Cys-333, which acts as the Nucleophile. Residue His-431 is part of the active site.

The protein belongs to the CobB/CobQ family. CobQ subfamily.

It functions in the pathway cofactor biosynthesis; adenosylcobalamin biosynthesis. Its function is as follows. Catalyzes amidations at positions B, D, E, and G on adenosylcobyrinic A,C-diamide. NH(2) groups are provided by glutamine, and one molecule of ATP is hydrogenolyzed for each amidation. The sequence is that of Cobyric acid synthase from Pseudomonas paraeruginosa (strain DSM 24068 / PA7) (Pseudomonas aeruginosa (strain PA7)).